Consider the following 1133-residue polypeptide: Protein TPR3 (1133 aa).

The 33-residue stretch at 4–36 folds into the LisH domain; it reads LSRELVFLILQFLDEEKFKETVHKLEQESGFYF. Residues 34–92 form the CTLH domain; sequence FYFNMKYFEDEVINGNWDEVERYLGGFTKVDDNRYSMKIFFEIRKQKYLEALDKHDRSK. The segment at 287–307 is disordered; the sequence is PTTANPSMDYPSGDSDHVSKR. 12 WD repeats span residues 348 to 388, 410 to 449, 455 to 496, 499 to 540, 543 to 586, 590 to 629, 634 to 673, 771 to 810, 837 to 875, 878 to 918, 921 to 960, and 1014 to 1053; these read SQGS…RLVL, DPTVSVNRIIWSPDGTLFGVAYSRHIVQIYSYHGGDDIRQ, AHVG…KQFT, GHEA…SRVD, APGH…VKRT, FRKRSMGVVQFDTTRNRFLAAGDEFLIKIWDMDNTSLLTT, GGLPASPRVRFNKEGTLLAVSTHENGIKILANADGVRLLR, MRTSKISRLIYTNSGVAILALASNAVHLLWKWPRNDRNSS, NPEEAVHCFALSKNDSYVMSASGGKISLFNMMTFKTMTT, PPPP…VKSK, GHSKKITGLAFSNVLNVLVSSGADAQICVWSTDGWDKLKS, and ENSSPITHAMFSCDSQLIYASFLDATVCIFNASSLRLQCR. The disordered stretch occupies residues 1099 to 1133; it reads ESERKWGNPPPAENGSTSALSTPPNGASSSDQPER. The span at 1112–1133 shows a compositional bias: polar residues; sequence NGSTSALSTPPNGASSSDQPER.

Tetramer. Interacts with D53. Interacts with MODD and HDAC1. Interacts with WOX1. Interacts with MOF1. Expressed in panicles, stems, leaves, spikelets and seed endosperm.

Probable downstream regulator of strigolactones signaling. Functions in a complex with MODD and HDAC1 to down-regulate the histone acetylation level at BZIP46 target genes. BZIP46 is a positive regulator of abscisic acid (ABA) signaling and drought stress tolerance. This chain is Protein TPR3, found in Oryza sativa subsp. japonica (Rice).